Reading from the N-terminus, the 446-residue chain is Packaging protein 1 (446 aa).

A disordered region spans residues 1-71 (MEEKAGLGRL…QPQASKPKKH (71 aa)). Positions 31-43 (FHSDRNHPNKEAE) are enriched in basic and acidic residues. 170–177 (GPTGCGKS) contacts ATP. Residues 439 to 446 (RYYHSKKK) form a DNA-binding region.

It belongs to the adenoviridae packaging protein 1 family. As to quaternary structure, homodimer. Part of a genome packaging complex composed of packaging proteins 1, 2 and 3; this complex specifically binds to the packaging sequence on the left end of viral genomic DNA and performs packaging of the viral genome. Interacts with protein 33K.

It is found in the virion. The protein localises to the host nucleus. It localises to the host nucleoplasm. Its subcellular location is the host nucleolus. Its function is as follows. Component of the packaging machinery which encapsidates the viral DNA into preformed capsids and transcriptional activator of the viral major late promoter (MLP). Binds, along with packaging proteins 2 and 3, to the specific packaging sequence on the left end of viral genomic DNA and displays ATPase activity thereby providing the power stroke of the packaging machinery. The activity of packaging protein IVa2 is stimulated by protein 33K which acts as a terminase. May be the protein that pumps DNA into the capsid powered by ATP hydrolysis. Specifically binds to the 5'-CG-3' nucleotides of the repeats making up the packaging sequence. Component of the DEF-A and DEF-B transcription factors that bind downstream elements of the major late promoter (MLP), and stimulate transcription from the MLP after initiation of viral DNA replication. DEF-A is a heterodimer packaging proteins 1 and 2 and DEF-B is a homodimer of packaging protein 1. The sequence is that of Packaging protein 1 from Canine adenovirus serotype 2 (strain Toronto A 26-61) (CAdV-2).